A 365-amino-acid chain; its full sequence is S-adenosylmethionine decarboxylase proenzyme (365 aa).

Catalysis depends on residues E31 and E34. S87 (schiff-base intermediate with substrate; via pyruvic acid) is an active-site residue. A Pyruvic acid (Ser); by autocatalysis modification is found at S87. C101 serves as the catalytic Proton donor; for catalytic activity. Active-site proton acceptor; for processing activity residues include S248 and H263.

This sequence belongs to the eukaryotic AdoMetDC family. Heterotetramer of two alpha and two beta chains. The cofactor is pyruvate. Post-translationally, is synthesized initially as an inactive proenzyme. Formation of the active enzyme involves a self-maturation process in which the active site pyruvoyl group is generated from an internal serine residue via an autocatalytic post-translational modification. Two non-identical subunits are generated from the proenzyme in this reaction, and the pyruvate is formed at the N-terminus of the alpha chain, which is derived from the carboxyl end of the proenzyme. The post-translation cleavage follows an unusual pathway, termed non-hydrolytic serinolysis, in which the side chain hydroxyl group of the serine supplies its oxygen atom to form the C-terminus of the beta chain, while the remainder of the serine residue undergoes an oxidative deamination to produce ammonia and the pyruvoyl group blocking the N-terminus of the alpha chain.

It catalyses the reaction S-adenosyl-L-methionine + H(+) = S-adenosyl 3-(methylsulfanyl)propylamine + CO2. The protein operates within amine and polyamine biosynthesis; S-adenosylmethioninamine biosynthesis; S-adenosylmethioninamine from S-adenosyl-L-methionine: step 1/1. This Onchocerca volvulus protein is S-adenosylmethionine decarboxylase proenzyme (smd-1).